A 22-amino-acid polypeptide reads, in one-letter code: 2.39 kDa venom peptide (22 aa).

Contains 2 disulfide bonds. In terms of tissue distribution, expressed by the venom gland.

It is found in the secreted. Its function is as follows. Not lethal to mice by intraperitoneal or intracerebroventricular injections in doses up to 100 micrograms. In Heterometrus spinifer (Asia giant forest scorpion), this protein is 2.39 kDa venom peptide.